Here is a 255-residue protein sequence, read N- to C-terminus: Hydroxyacylglutathione hydrolase (255 aa).

Zn(2+) is bound by residues His56, His58, Asp60, His61, His114, Asp133, and His171.

It belongs to the metallo-beta-lactamase superfamily. Glyoxalase II family. In terms of assembly, monomer. The cofactor is Zn(2+).

It catalyses the reaction an S-(2-hydroxyacyl)glutathione + H2O = a 2-hydroxy carboxylate + glutathione + H(+). The protein operates within secondary metabolite metabolism; methylglyoxal degradation; (R)-lactate from methylglyoxal: step 2/2. Thiolesterase that catalyzes the hydrolysis of S-D-lactoyl-glutathione to form glutathione and D-lactic acid. This Rhodopseudomonas palustris (strain BisB18) protein is Hydroxyacylglutathione hydrolase.